The primary structure comprises 158 residues: Transcription elongation factor GreA (158 aa).

Belongs to the GreA/GreB family.

Necessary for efficient RNA polymerase transcription elongation past template-encoded arresting sites. The arresting sites in DNA have the property of trapping a certain fraction of elongating RNA polymerases that pass through, resulting in locked ternary complexes. Cleavage of the nascent transcript by cleavage factors such as GreA or GreB allows the resumption of elongation from the new 3'terminus. GreA releases sequences of 2 to 3 nucleotides. The chain is Transcription elongation factor GreA from Ralstonia nicotianae (strain ATCC BAA-1114 / GMI1000) (Ralstonia solanacearum).